The following is a 162-amino-acid chain: Retinoic acid receptor responder protein 2 (162 aa).

Residues 1 to 20 (MKCLLISLALWLGTVGTRGT) form the signal peptide. 3 cysteine pairs are disulfide-bonded: Cys-79–Cys-89, Cys-100–Cys-119, and Cys-103–Cys-134. The propeptide occupies 157–162 (RALRTK).

Post-translationally, secreted in an inactive precursor form, prochemerin, which is proteolytically processed by a variety of extracellular proteases to generate forms with differing levels of bioactivity. For example, the removal of six amino acids results in chemerin-156, which exhibits the highest activity, while removal of seven amino acids results in chemerin-155 which has slightly less activity. Some proteases are able to cleave at more than one site and chemerin forms may be sequentially processed by different enzymes to modulate activity levels. The coordinated expression and activity of chemerin-modifying enzymes is essential for regulating its bioactivation, inactivation and, consequently, biological function. Cathepsin G cleaves seven C-terminal amino acids from prochemerin (chemerin-155), elastase is able to cleave six (chemerin-156), eight (chemerin-154) or eleven (chemerin-151), plasmin cleaves five amino acids (chemerin-157), and tryptase cleaves five (chemerin-157) or eight (chemerin-154). Multiple cleavages might be required to fully activate chemerin, with an initial tryptase cleavage resulting in chemerin with low activity (chemerin-157), and a second cleavage by carboxypeptidase N or B producing highly active chemerin (chemerin-156). Expressed in the differentiated adipocytes (at protein level). Abundantly expressed in the liver, adipose tissue including visceral, epididymal, and brown adipose tissue.

The protein localises to the secreted. Its function is as follows. Adipocyte-secreted protein (adipokine) that regulates adipogenesis, metabolism and inflammation through activation of the chemokine-like receptor 1 (CMKLR1). Also acts as a ligand for CMKLR2. Can also bind to C-C chemokine receptor-like 2 (CCRL2), but with a lower affinity than it does to CMKLR1 or CMKLR2. Positively regulates adipocyte differentiation, modulates the expression of adipocyte genes involved in lipid and glucose metabolism and might play a role in angiogenesis, a process essential for the expansion of white adipose tissue. Also acts as a pro-inflammatory adipokine, causing an increase in secretion of pro-inflammatory and prodiabetic adipokines, which further impair adipose tissue metabolic function and have negative systemic effects including impaired insulin sensitivity, altered glucose and lipid metabolism, and a decrease in vascular function in other tissues. Can have both pro- and anti-inflammatory properties depending on the modality of enzymatic cleavage by different classes of proteases. Acts as a chemotactic factor for leukocyte populations expressing CMKLR1, particularly immature plasmacytoid dendritic cells, but also immature myeloid DCs, macrophages and natural killer cells. Exerts an anti-inflammatory role by preventing TNF/TNFA-induced VCAM1 expression and monocytes adhesion in vascular endothelial cells. The effect is mediated via inhibiting activation of NF-kappa-B and CRK/p38 through stimulation of AKT1/NOS3 signaling and nitric oxide production. Exhibits an antimicrobial function in the skin. The sequence is that of Retinoic acid receptor responder protein 2 (Rarres2) from Mus musculus (Mouse).